Consider the following 491-residue polypeptide: UDP-N-acetylmuramate--L-alanine ligase (491 aa).

126–132 (GTHGKTT) provides a ligand contact to ATP.

Belongs to the MurCDEF family.

Its subcellular location is the cytoplasm. It catalyses the reaction UDP-N-acetyl-alpha-D-muramate + L-alanine + ATP = UDP-N-acetyl-alpha-D-muramoyl-L-alanine + ADP + phosphate + H(+). The protein operates within cell wall biogenesis; peptidoglycan biosynthesis. Functionally, cell wall formation. The chain is UDP-N-acetylmuramate--L-alanine ligase from Yersinia enterocolitica serotype O:8 / biotype 1B (strain NCTC 13174 / 8081).